Consider the following 88-residue polypeptide: Phosphocarrier protein HPr (88 aa).

Residues 1–88 (MAQKTFTVTA…DTMSKEGLGE (88 aa)) form the HPr domain. Phosphoserine is present on Ser12. His15 functions as the Pros-phosphohistidine intermediate in the catalytic mechanism. Position 46 is a phosphoserine; by HPrK/P (Ser46).

It belongs to the HPr family.

The protein resides in the cytoplasm. Phosphorylation on Ser-46 inhibits the phosphoryl transfer from enzyme I to HPr. In terms of biological role, general (non sugar-specific) component of the phosphoenolpyruvate-dependent sugar phosphotransferase system (sugar PTS). This major carbohydrate active-transport system catalyzes the phosphorylation of incoming sugar substrates concomitantly with their translocation across the cell membrane. The phosphoryl group from phosphoenolpyruvate (PEP) is transferred to the phosphoryl carrier protein HPr by enzyme I. Phospho-HPr then transfers it to the PTS EIIA domain. P-Ser-HPr interacts with the catabolite control protein A (CcpA), forming a complex that binds to DNA at the catabolite response elements cre, operator sites preceding a large number of catabolite-regulated genes. Thus, P-Ser-HPr is a corepressor in carbon catabolite repression (CCR), a mechanism that allows bacteria to coordinate and optimize the utilization of available carbon sources. P-Ser-HPr also plays a role in inducer exclusion, in which it probably interacts with several non-PTS permeases and inhibits their transport activity. The protein is Phosphocarrier protein HPr (ptsH) of Priestia megaterium (Bacillus megaterium).